The chain runs to 259 residues: Isoprenyl transferase (259 aa).

Aspartate 33 is an active-site residue. Residue aspartate 33 coordinates Mg(2+). Residues 34–37 (GNRR), tryptophan 38, histidine 51, and 79–81 (STE) contribute to the substrate site. Asparagine 82 (proton acceptor) is an active-site residue. Substrate contacts are provided by residues arginine 86, arginine 208, and 214 to 216 (RMS). Position 227 (glutamate 227) interacts with Mg(2+).

It belongs to the UPP synthase family. In terms of assembly, homodimer. It depends on Mg(2+) as a cofactor.

Functionally, catalyzes the condensation of isopentenyl diphosphate (IPP) with allylic pyrophosphates generating different type of terpenoids. The chain is Isoprenyl transferase from Streptomyces fradiae (Streptomyces roseoflavus).